A 156-amino-acid polypeptide reads, in one-letter code: Small ribosomal subunit protein uS7 (156 aa).

It belongs to the universal ribosomal protein uS7 family. In terms of assembly, part of the 30S ribosomal subunit. Contacts proteins S9 and S11.

Its function is as follows. One of the primary rRNA binding proteins, it binds directly to 16S rRNA where it nucleates assembly of the head domain of the 30S subunit. Is located at the subunit interface close to the decoding center, probably blocks exit of the E-site tRNA. This Cupriavidus necator (strain ATCC 17699 / DSM 428 / KCTC 22496 / NCIMB 10442 / H16 / Stanier 337) (Ralstonia eutropha) protein is Small ribosomal subunit protein uS7.